The following is a 198-amino-acid chain: Probable GTP-binding protein EngB (198 aa).

Positions 22-195 constitute an EngB-type G domain; it reads NIPEVALAGR…LEVIGRWVGL (174 aa). GTP-binding positions include 30–37, 57–61, 75–78, 142–145, and 174–176; these read GRSNVGKS, GRTRL, DLPG, TKAD, and FSA. Positions 37 and 59 each coordinate Mg(2+).

The protein belongs to the TRAFAC class TrmE-Era-EngA-EngB-Septin-like GTPase superfamily. EngB GTPase family. Mg(2+) serves as cofactor.

In terms of biological role, necessary for normal cell division and for the maintenance of normal septation. The sequence is that of Probable GTP-binding protein EngB from Pelotomaculum thermopropionicum (strain DSM 13744 / JCM 10971 / SI).